The chain runs to 69 residues: MVTVNVDKNEGLEKALKRFKRMIEKEAIIREWKRREYYEKPSTIRVKKEKAFKRKQAKKVRKLKQKIGK.

It belongs to the bacterial ribosomal protein bS21 family.

The polypeptide is Small ribosomal subunit protein bS21 (Borrelia duttonii (strain Ly)).